A 542-amino-acid chain; its full sequence is MAAKEVKFSVEAREKMLRGVDILANAVKVTLGPKGRNVVIDKSFGAPRITKDGVSVAKEIELEDKFENMGAQMVREVASKTSDIAGDGTTTATVLAQAIVKEGAKAVTSGMNPMDLKRGIDLAVSAIVEELKANARKISNNAEIAQVGTISANGDAEIGRFLAEAVQKVGNDGVITVEEAKTAETELEVVEGMQFDRGYLSPYFVTNADKMRVEFEDPYILIHEKKLSNLQSMLPILEAVVQSGKPLLIIAEDVEGEALATLVVNKLRGGLKIAAVKAPGFGDRRKAMLEDIAILTAGTVISEDLGIKLENVTLNMLGRAKKITVEKENTTIIDGVGSKEEISGRIAQIKAQIEETTSDYDREKLQERLAKLAGGVAVIRVGGSTEVEVKEKKDRVDDALHATRAAVEEGILPGGGVALLRAVKALDNIKTANDDQRVGVEIVRRALEAPARQIAENAGAEGSVVVGKLREKSDFSYGWNAQTGEFGDLYAQGVIDPAKVVRTALQDASSIAGLLVTTEAMIAEKPKKDAPPAMPAGAGMDF.

ATP contacts are provided by residues threonine 30–proline 33, lysine 51, aspartate 87–threonine 91, glycine 415, and aspartate 496.

The protein belongs to the chaperonin (HSP60) family. Forms a cylinder of 14 subunits composed of two heptameric rings stacked back-to-back. Interacts with the co-chaperonin GroES.

The protein localises to the cytoplasm. The catalysed reaction is ATP + H2O + a folded polypeptide = ADP + phosphate + an unfolded polypeptide.. Together with its co-chaperonin GroES, plays an essential role in assisting protein folding. The GroEL-GroES system forms a nano-cage that allows encapsulation of the non-native substrate proteins and provides a physical environment optimized to promote and accelerate protein folding. This chain is Chaperonin GroEL 4, found in Rhizobium etli (strain ATCC 51251 / DSM 11541 / JCM 21823 / NBRC 15573 / CFN 42).